The following is a 59-amino-acid chain: Large ribosomal subunit protein uL30 (59 aa).

This sequence belongs to the universal ribosomal protein uL30 family. In terms of assembly, part of the 50S ribosomal subunit.

The chain is Large ribosomal subunit protein uL30 from Yersinia pseudotuberculosis serotype I (strain IP32953).